Reading from the N-terminus, the 425-residue chain is Alpha-muurolene synthase (425 aa).

Mg(2+) is bound by residues D97, D101, N240, S244, and E248. Positions D97 to D101 match the DDXXD motif motif. A disordered region spans residues V348–V382. Positions A349–Q362 are enriched in pro residues. Basic and acidic residues predominate over residues A366–D377.

The protein belongs to the terpene synthase family. It depends on Mg(2+) as a cofactor.

It carries out the reaction (2E,6E)-farnesyl diphosphate = alpha-muurolene + diphosphate. The catalysed reaction is (2E,6E)-farnesyl diphosphate = gamma-muurolene + diphosphate. It catalyses the reaction (2E,6E)-farnesyl diphosphate = (+)-(R)-germacrene A + diphosphate. In terms of biological role, sesquiterpene synthase that catalyzes the formation of alpha-muurolene, and at lower level (+)-(R)-germacrene A and gamma-muurolene. This chain is Alpha-muurolene synthase (COP3), found in Coprinopsis cinerea (strain Okayama-7 / 130 / ATCC MYA-4618 / FGSC 9003) (Inky cap fungus).